The sequence spans 543 residues: ATP-dependent ubiquitin transferase-like protein Cap2 (543 aa).

An E2-like domain region spans residues 1-159; it reads MSSAAAVADV…QNCIVAHANG (159 aa). Catalysis depends on cysteine 84, which acts as the For E2-like domain. The tract at residues 160-305 is linker domain; sequence CPLWFITDNE…YLAQRNMPNS (146 aa). Positions 306–543 are adenylation plus E1-like domain; it reads KTLAGKNIAV…RDRECPLCNS (238 aa). Residues cysteine 450 and cysteine 453 each act as for E1-like domain in the active site.

It in the C-terminal section; belongs to the HesA/MoeB/ThiF family. Forms a Cap2-CdnA complex. A Cap2 dimer is bound on either side by a CdnA monomer.

CD-NTase priming component of a CBASS antiviral system. CBASS (cyclic oligonucleotide-based antiphage signaling system) provides immunity against bacteriophages. The CD-NTase protein (CdnA) synthesizes cyclic nucleotides in response to infection; these serve as specific second messenger signals. The signals activate a diverse range of effectors, leading to bacterial cell death and thus abortive phage infection. A type II-A(GA) CBASS system. In terms of biological role, acts as a protein transferase, conjugating CdnA, the CD-NTase, to unidentified target(s) in the cell probably via an E1-E2 ubiquitin transferase-like mechanism. This primes CdnA, upon phage infection CdnA activates and makes cyclic nucleotides. Protein conjugation requires ATP. Functionally, the capV-cdnA-cap2-cap3 operon provides about 10(4)-fold protection in strain BWHPSA011 against infection by phage PaMx41. In P.aeruginosa strain PAO1 it confers protection against phages PaMx41 and JBD18 but not JBD67 (JBD18 and JBD67 do not replicate in BWHPSA011 / Pa011). When acb2 in JBD67 is deleted this CBASS operon then protects against JDB67 also. This CBASS system limits prophage induction of lysogenized JBD67 as well as viral lytic replication. The polypeptide is ATP-dependent ubiquitin transferase-like protein Cap2 (Pseudomonas aeruginosa (strain BWHPSA011 / Pa011)).